Consider the following 850-residue polypeptide: Transforming growth factor beta receptor type 3 (850 aa).

Residues Met-1–Ala-22 form the signal peptide. The Extracellular segment spans residues Gly-23 to Thr-785. An intrachain disulfide couples Cys-54 to Cys-199. Asn-143 and Asn-491 each carry an N-linked (GlcNAc...) asparagine glycan. The region spanning Lys-454–Cys-728 is the ZP domain. Residues Ser-528–Glu-557 are disordered. O-linked (Xyl...) (glycosaminoglycan) serine glycans are attached at residues Ser-533 and Ser-544. Asn-570, Asn-589, and Asn-696 each carry an N-linked (GlcNAc...) asparagine glycan. 3 disulfides stabilise this stretch: Cys-638-Cys-704, Cys-659-Cys-728, and Cys-709-Cys-721. Positions Met-735–Pro-749 are interaction with TGF-beta ligand. A helical membrane pass occupies residues Val-786 to Tyr-808. Over Ser-809 to Ala-850 the chain is Cytoplasmic. The segment covering Arg-817–Ala-833 has biased composition (polar residues). The tract at residues Arg-817–Ala-850 is disordered. Low complexity predominate over residues Ser-835–Ala-850. Thr-839 carries the post-translational modification Phosphothreonine.

As to quaternary structure, forms homodimers and homooligomers. Interacts with DYNLT4. Interacts with integrin ITGA5:ITGB1; this interaction promotes the internalization and trafficking of ITGA5:ITGB1 into endocytic vesicles. Interacts with TGFB1, BMP2, BMP5, BMP7 or GDF5 and inhibin A via the ligand binding domains. Interacts with ALK3/BMPR1A; this interaction results in the cell surface retention of BMPR1A. Interacts with ALK6/BMPR1B; this interaction enhances BMPR1B-mediated stimulation of the BMP signaling pathway. Interacts with the scaffolding protein beta-arrestin2/ARRB2; this interaction mediates internalization of TGFBR3 and thus regulates migration, actin cytoskeleton and activation of CDC42. Extensively modified by glycosaminoglycan groups (GAG). Post-translationally, phosphorylated in the cytoplasmic domain by the type II receptor TGFBR2 at THR-839 to mediate recruitment of ARRB2 and subsequent internalization of TGFBR2 and TGFBR3.

It localises to the cell membrane. The protein localises to the secreted. The protein resides in the extracellular space. It is found in the extracellular matrix. Cell surface receptor that regulates diverse cellular processes including cell proliferation, differentiation, migration, and apoptosis. Initiates BMP, inhibin, and TGF-beta signaling pathways by interacting with different ligands including TGFB1, BMP2, BMP5, BMP7 or GDF5. Alternatively, acts as a cell surface coreceptor for BMP ligands, serving to enhance ligand binding by differentially regulating BMPR1A/ALK3 and BMPR1B/ALK6 receptor trafficking. Promotes epithelial cell adhesion, focal adhesion formation and integrin signaling during epithelial cell spreading on fibronectin. By interacting with the scaffolding protein beta-arrestin2/ARRB2, regulates migration or actin cytoskeleton and promotes the activation of CDC42 as well as the inhibition of NF-kappa-B. In gonadotrope cells, acts as an inhibin A coreceptor and regulates follicle-stimulating hormone (FSH) levels and female fertility. Plays a role in the inhibition of directed and random cell migration in epithelial cells by altering the actin cytoskeletal organization. Participates in epithelial-mesenchymal transformation (EMT) upon binding to BMP2 or TGFB2, by activating the PAR6/SMURF1/RHOA pathway. This Mus musculus (Mouse) protein is Transforming growth factor beta receptor type 3 (Tgfbr3).